A 122-amino-acid chain; its full sequence is Large ribosomal subunit protein uL14 (122 aa).

The protein belongs to the universal ribosomal protein uL14 family. In terms of assembly, part of the 50S ribosomal subunit. Forms a cluster with proteins L3 and L19. In the 70S ribosome, L14 and L19 interact and together make contacts with the 16S rRNA in bridges B5 and B8.

Binds to 23S rRNA. Forms part of two intersubunit bridges in the 70S ribosome. The sequence is that of Large ribosomal subunit protein uL14 from Methylorubrum populi (strain ATCC BAA-705 / NCIMB 13946 / BJ001) (Methylobacterium populi).